The sequence spans 566 residues: OTU domain-containing protein 5 (566 aa).

Disordered stretches follow at residues M1–L117 and G145–Y175. The segment covering P11–P30 has biased composition (pro residues). Gly residues predominate over residues A34–G47. Over residues A63 to P75 the composition is skewed to pro residues. Residue S64 is modified to Phosphoserine. The span at A84–Q97 shows a compositional bias: low complexity. Residues G105–D115 are compositionally biased toward gly residues. Phosphoserine is present on S165. At Y175 the chain carries Phosphotyrosine. Position 177 is a phosphoserine (S177). T195 bears the Phosphothreonine mark. Positions F213–P336 constitute an OTU domain. The interval M218–C224 is cys-loop. D221 is a catalytic residue. C224 (nucleophile) is an active-site residue. The variable-loop stretch occupies residues K273–I283. The residue at position 323 (S323) is a Phosphoserine. The his-loop stretch occupies residues Y324–H329. The active site involves H329. Phosphoserine occurs at positions 332 and 370. A disordered region spans residues A413–D499. Composition is skewed to low complexity over residues A425–S438 and S445–P457. S447 carries the phosphoserine modification. Residue T502 is modified to Phosphothreonine. Position 503 is a phosphoserine (S503).

The protein belongs to the peptidase C85 family. Interacts with TRAF3. Phosphorylation at Ser-177 is required for deubiquitinating activity. Phosphorylation at Ser-323, Ser-332 and Ser-503 by MTOR promotes its activity.

The protein localises to the nucleus. It catalyses the reaction Thiol-dependent hydrolysis of ester, thioester, amide, peptide and isopeptide bonds formed by the C-terminal Gly of ubiquitin (a 76-residue protein attached to proteins as an intracellular targeting signal).. Its activity is regulated as follows. Inhibited by N-ethyl-maleimide (NEM). In terms of biological role, deubiquitinating enzyme that functions as a negative regulator of the innate immune system. Has peptidase activity towards 'Lys-48'- and 'Lys-63'-linked polyubiquitin chains. Can also cleave 'Lys-11'-linked ubiquitin chains (in vitro). Acts via TRAF3 deubiquitination and subsequent suppression of type I interferon (IFN) production. Controls neuroectodermal differentiation through cleaving 'Lys-48'-linked ubiquitin chains to counteract degradation of select chromatin regulators such as ARID1A, HDAC2 and HCF1. Acts as a positive regulator of mTORC1 and mTORC2 signaling following phosphorylation by MTOR: acts by mediating deubiquitination of BTRC, leading to its stability. This Mus musculus (Mouse) protein is OTU domain-containing protein 5.